The chain runs to 789 residues: Probable Xaa-Pro aminopeptidase SNOG_02267 (789 aa).

Residues D240, D251, E375, and E416 each coordinate Mn(2+). 2 disordered regions span residues S607–A658 and N670–L704. The span at V622 to T637 shows a compositional bias: polar residues. The segment covering A638 to Q650 has biased composition (basic and acidic residues).

The protein belongs to the peptidase M24B family. Requires Mn(2+) as cofactor.

It catalyses the reaction Release of any N-terminal amino acid, including proline, that is linked to proline, even from a dipeptide or tripeptide.. Its function is as follows. Catalyzes the removal of a penultimate prolyl residue from the N-termini of peptides. In Phaeosphaeria nodorum (strain SN15 / ATCC MYA-4574 / FGSC 10173) (Glume blotch fungus), this protein is Probable Xaa-Pro aminopeptidase SNOG_02267.